We begin with the raw amino-acid sequence, 528 residues long: Glucose-6-phosphate isomerase (528 aa).

Glu-322 (proton donor) is an active-site residue. Residues His-351 and Lys-455 contribute to the active site.

The protein belongs to the GPI family.

The protein resides in the cytoplasm. It catalyses the reaction alpha-D-glucose 6-phosphate = beta-D-fructose 6-phosphate. Its pathway is carbohydrate biosynthesis; gluconeogenesis. It participates in carbohydrate degradation; glycolysis; D-glyceraldehyde 3-phosphate and glycerone phosphate from D-glucose: step 2/4. Its function is as follows. Catalyzes the reversible isomerization of glucose-6-phosphate to fructose-6-phosphate. The sequence is that of Glucose-6-phosphate isomerase from Nostoc punctiforme (strain ATCC 29133 / PCC 73102).